Consider the following 195-residue polypeptide: Interferon omega-1 (195 aa).

Residues Met-1 to Ser-23 form the signal peptide. Intrachain disulfides connect Cys-24-Cys-122 and Cys-52-Cys-162. The N-linked (GlcNAc...) asparagine glycan is linked to Asn-101.

This sequence belongs to the alpha/beta interferon family.

The protein resides in the secreted. The protein is Interferon omega-1 of Equus caballus (Horse).